The primary structure comprises 84 residues: ATP synthase subunit c (84 aa).

2 helical membrane-spanning segments follow: residues 10–30 (IAVG…FALL) and 53–73 (FIIA…ALLF).

Belongs to the ATPase C chain family. As to quaternary structure, F-type ATPases have 2 components, F(1) - the catalytic core - and F(0) - the membrane proton channel. F(1) has five subunits: alpha(3), beta(3), gamma(1), delta(1), epsilon(1). F(0) has three main subunits: a(1), b(2) and c(10-14). The alpha and beta chains form an alternating ring which encloses part of the gamma chain. F(1) is attached to F(0) by a central stalk formed by the gamma and epsilon chains, while a peripheral stalk is formed by the delta and b chains.

The protein localises to the cell inner membrane. Its function is as follows. F(1)F(0) ATP synthase produces ATP from ADP in the presence of a proton or sodium gradient. F-type ATPases consist of two structural domains, F(1) containing the extramembraneous catalytic core and F(0) containing the membrane proton channel, linked together by a central stalk and a peripheral stalk. During catalysis, ATP synthesis in the catalytic domain of F(1) is coupled via a rotary mechanism of the central stalk subunits to proton translocation. Key component of the F(0) channel; it plays a direct role in translocation across the membrane. A homomeric c-ring of between 10-14 subunits forms the central stalk rotor element with the F(1) delta and epsilon subunits. The chain is ATP synthase subunit c from Vibrio alginolyticus.